Here is a 256-residue protein sequence, read N- to C-terminus: F-actin-capping protein subunit beta (256 aa).

Position 1 is an N-acetylmethionine (Met-1).

The protein belongs to the F-actin-capping protein beta subunit family. As to quaternary structure, component of the F-actin capping complex, composed of a heterodimer of an alpha and a beta subunit.

It is found in the cytoplasm. The protein resides in the cytoskeleton. In terms of biological role, F-actin-capping proteins bind in a Ca(2+)-independent manner to the fast growing ends of actin filaments (barbed end) thereby blocking the exchange of subunits at these ends. Unlike other capping proteins (such as gelsolin and severin), these proteins do not sever actin filaments. The sequence is that of F-actin-capping protein subunit beta from Arabidopsis thaliana (Mouse-ear cress).